Reading from the N-terminus, the 291-residue chain is Nucleotide-binding protein Cthe_0113 (291 aa).

An ATP-binding site is contributed by 8 to 15 (GISGAGKS). Residue 59-62 (DIRG) participates in GTP binding.

Belongs to the RapZ-like family.

Functionally, displays ATPase and GTPase activities. This is Nucleotide-binding protein Cthe_0113 from Acetivibrio thermocellus (strain ATCC 27405 / DSM 1237 / JCM 9322 / NBRC 103400 / NCIMB 10682 / NRRL B-4536 / VPI 7372) (Clostridium thermocellum).